The chain runs to 455 residues: Kynurenine 3-monooxygenase (455 aa).

The protein belongs to the aromatic-ring hydroxylase family. KMO subfamily. The cofactor is FAD.

The enzyme catalyses L-kynurenine + NADPH + O2 + H(+) = 3-hydroxy-L-kynurenine + NADP(+) + H2O. The protein operates within cofactor biosynthesis; NAD(+) biosynthesis; quinolinate from L-kynurenine: step 1/3. Functionally, catalyzes the hydroxylation of L-kynurenine (L-Kyn) to form 3-hydroxy-L-kynurenine (L-3OHKyn). Required for synthesis of quinolinic acid. The sequence is that of Kynurenine 3-monooxygenase from Stenotrophomonas maltophilia (strain K279a).